Consider the following 320-residue polypeptide: MRSAQVYRWQIPMDAGVVLRDRRLKTRDGLYVCLREGEREGWGEISPLPGFSQETWEEAQSVLLAWVNNWLAGDCELPQMTSVAFGVSCALAELADTLPQAANYRAAPLCNGDPDDLILKLADMPGEKVAKVKVGLYEAVRDGMVVNLLLEAIPDLHLRLDANRAWTPLKGQQFAKYVNPDYRHRIAFLEEPCKTRDDSRAFARETGIAIAWDESLREPDFAFVAEEGVRAVVIKPTLTGSLEKVREQVQAAHALGLTAVISSSIESSLGLTQLARIAAWLTPDTIPGLDTLDLMQAQQVRRWPGSTLPVVEVDALERLL.

The Proton donor role is filled by K133. Mg(2+) is bound by residues D161, E190, and D213. Residue K235 is the Proton acceptor of the active site.

This sequence belongs to the mandelate racemase/muconate lactonizing enzyme family. MenC type 1 subfamily. It depends on a divalent metal cation as a cofactor.

The enzyme catalyses (1R,6R)-6-hydroxy-2-succinyl-cyclohexa-2,4-diene-1-carboxylate = 2-succinylbenzoate + H2O. The protein operates within quinol/quinone metabolism; 1,4-dihydroxy-2-naphthoate biosynthesis; 1,4-dihydroxy-2-naphthoate from chorismate: step 4/7. It functions in the pathway quinol/quinone metabolism; menaquinone biosynthesis. Its function is as follows. Converts 2-succinyl-6-hydroxy-2,4-cyclohexadiene-1-carboxylate (SHCHC) to 2-succinylbenzoate (OSB). This is o-succinylbenzoate synthase from Escherichia coli O9:H4 (strain HS).